Here is a 215-residue protein sequence, read N- to C-terminus: Guanylate kinase (215 aa).

Residues 9–187 (GTLYIVSAPS…ALDELSCLVH (179 aa)) enclose the Guanylate kinase-like domain. Residue 16-23 (APSGAGKT) coordinates ATP.

The protein belongs to the guanylate kinase family.

The protein localises to the cytoplasm. The catalysed reaction is GMP + ATP = GDP + ADP. Functionally, essential for recycling GMP and indirectly, cGMP. The sequence is that of Guanylate kinase from Chromohalobacter salexigens (strain ATCC BAA-138 / DSM 3043 / CIP 106854 / NCIMB 13768 / 1H11).